The primary structure comprises 317 residues: MRVLWVALVVTLLAGCRTEDEPGPPPEVHVWWEESKWQGSQPWEQALGRFWDYLRWVQSLSDQVQEELLSTKVTQELTELIEESMKEVKAYREELEAQLGPVTQETQARLSKELQAAQARVGADMEDVRNRLVLYRSEVHNMLGQTTEELRSRLASHLRNVRKRLVRDTEDLQKRLAVYQAGLREGAERSVSALRERLGPLVEQGRLRAATLSTRAGQPLRERAEAWGQKLRGRLEEMGSRTRDRLDEMRDELEEVRTKVEEQGSQLRLQAEAFQARLKGWFEPLVEDMRRQWAGLVERMQSAVSISSSTSAPSDNQ.

The first 18 residues, Met1–Thr18, serve as a signal peptide directing secretion. A run of 8 repeats spans residues Glu79 to Gly100, Pro101 to Gly122, Ala123 to Gly144, Gln145 to Val166, Arg167 to Glu188, Arg189 to Ala210, Thr211 to Arg232, and Gly233 to Glu254. Residues Glu79–Glu254 form an 8 X 22 AA approximate tandem repeats region. Met142 is modified (methionine sulfoxide). Positions His157–Arg167 are LDL and other lipoprotein receptors binding. Position 161-164 (Val161–Arg164) interacts with heparin. Residues Ala209–Met289 are lipid-binding and lipoprotein association. Gly228–Leu235 provides a ligand contact to heparin. The homooligomerization stretch occupies residues Ser265 to Gln317. Residues Arg277–Met289 are specificity for association with VLDL.

This sequence belongs to the apolipoprotein A1/A4/E family. As to quaternary structure, homotetramer. May interact with ABCA1; functionally associated with ABCA1 in the biogenesis of HDLs. May interact with APP/A4 amyloid-beta peptide; the interaction is extremely stable in vitro but its physiological significance is unclear. May interact with MAPT. May interact with MAP2. In the cerebrospinal fluid, interacts with secreted SORL1. Interacts with PMEL; this allows the loading of PMEL luminal fragment on ILVs to induce fibril nucleation. APOE exists as multiple glycosylated and sialylated glycoforms within cells and in plasma. The extent of glycosylation and sialylation are tissue and context specific. In terms of processing, glycated in plasma VLDL. Post-translationally, phosphorylated by FAM20C in the extracellular medium.

Its subcellular location is the secreted. The protein resides in the extracellular space. It is found in the extracellular matrix. It localises to the extracellular vesicle. The protein localises to the endosome. Its subcellular location is the multivesicular body. Functionally, APOE is an apolipoprotein, a protein associating with lipid particles, that mainly functions in lipoprotein-mediated lipid transport between organs via the plasma and interstitial fluids. APOE is a core component of plasma lipoproteins and is involved in their production, conversion and clearance. Apolipoproteins are amphipathic molecules that interact both with lipids of the lipoprotein particle core and the aqueous environment of the plasma. As such, APOE associates with chylomicrons, chylomicron remnants, very low density lipoproteins (VLDL) and intermediate density lipoproteins (IDL) but shows a preferential binding to high-density lipoproteins (HDL). It also binds a wide range of cellular receptors including the LDL receptor/LDLR and the very low-density lipoprotein receptor/VLDLR that mediate the cellular uptake of the APOE-containing lipoprotein particles. Finally, APOE also has a heparin-binding activity and binds heparan-sulfate proteoglycans on the surface of cells, a property that supports the capture and the receptor-mediated uptake of APOE-containing lipoproteins by cells. The chain is Apolipoprotein E (APOE) from Sus scrofa (Pig).